Here is a 372-residue protein sequence, read N- to C-terminus: N-methyl-L-tryptophan oxidase (372 aa).

4-34 is an FAD binding site; the sequence is DLIIIGSGSVGAAAGYYATRAGLNVLMTDAH. Position 308 is an S-8alpha-FAD cysteine (cysteine 308).

It belongs to the MSOX/MTOX family. MTOX subfamily. Monomer. FAD is required as a cofactor.

It catalyses the reaction N(alpha)-methyl-L-tryptophan + O2 + H2O = L-tryptophan + formaldehyde + H2O2. Its function is as follows. Catalyzes the oxidative demethylation of N-methyl-L-tryptophan. This chain is N-methyl-L-tryptophan oxidase, found in Escherichia coli O9:H4 (strain HS).